The primary structure comprises 331 residues: Phosphate acyltransferase (331 aa).

Belongs to the PlsX family. As to quaternary structure, homodimer. Probably interacts with PlsY.

Its subcellular location is the cytoplasm. It catalyses the reaction a fatty acyl-[ACP] + phosphate = an acyl phosphate + holo-[ACP]. The protein operates within lipid metabolism; phospholipid metabolism. Catalyzes the reversible formation of acyl-phosphate (acyl-PO(4)) from acyl-[acyl-carrier-protein] (acyl-ACP). This enzyme utilizes acyl-ACP as fatty acyl donor, but not acyl-CoA. This Lactococcus lactis subsp. cremoris (strain SK11) protein is Phosphate acyltransferase.